A 332-amino-acid chain; its full sequence is 2-oxoglutarate-dependent dioxygenase ecdK (332 aa).

The Fe2OG dioxygenase domain maps to 178 to 294 (HASELRLNHY…RRSVAFFLKP (117 aa)). The Fe cation site is built by H206, D208, and H266. R285 serves as a coordination point for 2-oxoglutarate.

It belongs to the iron/ascorbate-dependent oxidoreductase family. Fe(2+) is required as a cofactor.

Its pathway is antifungal biosynthesis. Functionally, 2-oxoglutarate-dependent dioxygenase; part of the gene cluster that mediates the biosynthesis of echinocandin B, a fungal lipidated cyclic hexapeptide that acts as an antifungal agent. Linoleoyl-AMP, produced by the fatty-acyl-AMP ligase ecdI, is transferred to the initiation carrier domain (T0) of ecdA. The linoleoyl-S-phosphopantetheinyl-T0 is sequentially extended with L-ornithine, L-threonine, L-proline, L-homotyrosine, L-threonine, and 4R-methyl-L-proline to form the linear hexapeptide. Thereafter, the terminal condensation (C7) performs macrocyclization of the NRPS product and the cyclic scaffold is released from ecdA. All six of the amino acid residues are hydroxylated, including 4R,5R-dihydroxy-L-ornithine, 4R-hydroxyl-L-proline, 3S,4S-dihydroxy-L-homotyrosine, and 3S-hydroxyl-4S-methyl-L-prolin. In the pathway, all the hydroxylation reactions are proposed to occur following completion of the cyclic peptide, so the unhydroxylated precursor produced by ecdA will undergo six rounds of hydroxylation. Five hydroxylase genes (ecdG, ecdH, ecdK, htyE and htyF) are embedded within the echinocandin B (ecd) and L-homotyrosine (hty) clusters. The polypeptide is 2-oxoglutarate-dependent dioxygenase ecdK (Aspergillus rugulosus (Emericella rugulosa)).